The following is a 144-amino-acid chain: D-aminoacyl-tRNA deacylase (144 aa).

The Gly-cisPro motif, important for rejection of L-amino acids signature appears at 137 to 138 (GP).

It belongs to the DTD family. Homodimer.

It is found in the cytoplasm. It catalyses the reaction glycyl-tRNA(Ala) + H2O = tRNA(Ala) + glycine + H(+). The catalysed reaction is a D-aminoacyl-tRNA + H2O = a tRNA + a D-alpha-amino acid + H(+). An aminoacyl-tRNA editing enzyme that deacylates mischarged D-aminoacyl-tRNAs. Also deacylates mischarged glycyl-tRNA(Ala), protecting cells against glycine mischarging by AlaRS. Acts via tRNA-based rather than protein-based catalysis; rejects L-amino acids rather than detecting D-amino acids in the active site. By recycling D-aminoacyl-tRNA to D-amino acids and free tRNA molecules, this enzyme counteracts the toxicity associated with the formation of D-aminoacyl-tRNA entities in vivo and helps enforce protein L-homochirality. The protein is D-aminoacyl-tRNA deacylase of Marinomonas sp. (strain MWYL1).